A 428-amino-acid polypeptide reads, in one-letter code: Major capsid protein (428 aa).

A coiled-coil region spans residues 4 to 24; it reads IEELRRQRAGINEQIQALATI.

The protein belongs to the HK97 phage major capsid protein family. The scaffolding domain delta is cleaved by the viral protease and lost after assembly.

It localises to the virion. Its function is as follows. Major capsid protein that assembles to form an icosahedral capsid. The polypeptide is Major capsid protein (Klebsiella oxytoca (Bacteriophage phiKO2)).